A 164-amino-acid polypeptide reads, in one-letter code: Phosphopantetheine adenylyltransferase (164 aa).

Ser9 serves as a coordination point for substrate. Residues 9–10 (SF) and His17 contribute to the ATP site. Positions 41, 73, and 87 each coordinate substrate. ATP is bound by residues Glu98 and 122–128 (YSFLSSS).

Belongs to the bacterial CoaD family. As to quaternary structure, homohexamer. The cofactor is Mg(2+).

It is found in the cytoplasm. It carries out the reaction (R)-4'-phosphopantetheine + ATP + H(+) = 3'-dephospho-CoA + diphosphate. It participates in cofactor biosynthesis; coenzyme A biosynthesis; CoA from (R)-pantothenate: step 4/5. Functionally, reversibly transfers an adenylyl group from ATP to 4'-phosphopantetheine, yielding dephospho-CoA (dPCoA) and pyrophosphate. The polypeptide is Phosphopantetheine adenylyltransferase (Thermobifida fusca (strain YX)).